Reading from the N-terminus, the 246-residue chain is Enolase-phosphatase E1 (246 aa).

Mg(2+)-binding residues include Asp15 and Glu17. Residues 134-135 and Lys174 contribute to the substrate site; that span reads SS. A Mg(2+)-binding site is contributed by Asp201.

The protein belongs to the HAD-like hydrolase superfamily. MasA/MtnC family. Monomer. Mg(2+) is required as a cofactor.

The protein localises to the cytoplasm. It is found in the nucleus. It catalyses the reaction 5-methylsulfanyl-2,3-dioxopentyl phosphate + H2O = 1,2-dihydroxy-5-(methylsulfanyl)pent-1-en-3-one + phosphate. The protein operates within amino-acid biosynthesis; L-methionine biosynthesis via salvage pathway; L-methionine from S-methyl-5-thio-alpha-D-ribose 1-phosphate: step 3/6. Its pathway is amino-acid biosynthesis; L-methionine biosynthesis via salvage pathway; L-methionine from S-methyl-5-thio-alpha-D-ribose 1-phosphate: step 4/6. Bifunctional enzyme that catalyzes the enolization of 2,3-diketo-5-methylthiopentyl-1-phosphate (DK-MTP-1-P) into the intermediate 2-hydroxy-3-keto-5-methylthiopentenyl-1-phosphate (HK-MTPenyl-1-P), which is then dephosphorylated to form the acireductone 1,2-dihydroxy-3-keto-5-methylthiopentene (DHK-MTPene). This Debaryomyces hansenii (strain ATCC 36239 / CBS 767 / BCRC 21394 / JCM 1990 / NBRC 0083 / IGC 2968) (Yeast) protein is Enolase-phosphatase E1.